We begin with the raw amino-acid sequence, 240 residues long: Ribonuclease PH (240 aa).

Residues R87 and 125–127 contribute to the phosphate site; that span reads GTR.

Belongs to the RNase PH family. Homohexameric ring arranged as a trimer of dimers.

It carries out the reaction tRNA(n+1) + phosphate = tRNA(n) + a ribonucleoside 5'-diphosphate. Phosphorolytic 3'-5' exoribonuclease that plays an important role in tRNA 3'-end maturation. Removes nucleotide residues following the 3'-CCA terminus of tRNAs; can also add nucleotides to the ends of RNA molecules by using nucleoside diphosphates as substrates, but this may not be physiologically important. Probably plays a role in initiation of 16S rRNA degradation (leading to ribosome degradation) during starvation. The protein is Ribonuclease PH of Crocosphaera subtropica (strain ATCC 51142 / BH68) (Cyanothece sp. (strain ATCC 51142)).